We begin with the raw amino-acid sequence, 136 residues long: Holo-[acyl-carrier-protein] synthase (136 aa).

The Mg(2+) site is built by Asp8 and Glu57.

This sequence belongs to the P-Pant transferase superfamily. AcpS family. Mg(2+) serves as cofactor.

It is found in the cytoplasm. It catalyses the reaction apo-[ACP] + CoA = holo-[ACP] + adenosine 3',5'-bisphosphate + H(+). Its function is as follows. Transfers the 4'-phosphopantetheine moiety from coenzyme A to a Ser of acyl-carrier-protein. The polypeptide is Holo-[acyl-carrier-protein] synthase (Methylorubrum extorquens (strain PA1) (Methylobacterium extorquens)).